The following is a 474-amino-acid chain: Nitric oxide reductase subunit B (474 aa).

The helical transmembrane segment at 19-39 (YFVFALILFVGQVLFGLIMGL) threads the bilayer. His-60 is a binding site for heme b. Helical transmembrane passes span 61–81 (TNLL…YLIP), 95–115 (IILF…YLFV), 145–165 (IGIV…MLKG), 169–189 (VVST…LFAF), 207–227 (HLWV…FVLI), 243–263 (VIIA…FFWI), 270–290 (LWVG…MVLF), and 308–328 (SLWA…WGFM). Fe cation contacts are provided by His-207, His-258, and His-259. Positions 347 and 349 each coordinate heme b. 3 helical membrane passes run 348 to 368 (GHLA…SYAM), 390 to 410 (FWLM…AGVV), and 433 to 453 (LAIF…GLVC).

The protein belongs to the heme-copper respiratory oxidase family. Heterodimer of cytochromes b (large subunit) and c (small subunit).

It is found in the cell membrane. The enzyme catalyses nitrous oxide + 2 Fe(III)-[cytochrome c] + H2O = 2 nitric oxide + 2 Fe(II)-[cytochrome c] + 2 H(+). Its pathway is nitrogen metabolism; nitrate reduction (denitrification); dinitrogen from nitrate: step 3/4. Functionally, component of the anaerobic respiratory chain that transforms nitrate to dinitrogen (denitrification). NorB is the catalytic subunit of the enzyme complex. Shows proton pump activity across the membrane in denitrifying bacterial cells. The mononitrogen reduction is probably coupled to electron transport phosphorylation. This Stutzerimonas stutzeri (Pseudomonas stutzeri) protein is Nitric oxide reductase subunit B (norB).